Here is a 94-residue protein sequence, read N- to C-terminus: Phosphoribosyl-ATP pyrophosphatase (94 aa).

The protein belongs to the PRA-PH family.

Its subcellular location is the cytoplasm. The enzyme catalyses 1-(5-phospho-beta-D-ribosyl)-ATP + H2O = 1-(5-phospho-beta-D-ribosyl)-5'-AMP + diphosphate + H(+). The protein operates within amino-acid biosynthesis; L-histidine biosynthesis; L-histidine from 5-phospho-alpha-D-ribose 1-diphosphate: step 2/9. This Saccharolobus islandicus (strain Y.N.15.51 / Yellowstone #2) (Sulfolobus islandicus) protein is Phosphoribosyl-ATP pyrophosphatase.